Reading from the N-terminus, the 181-residue chain is Regulator of G-protein signaling 5 (181 aa).

The region spanning 64–180 is the RGS domain; the sequence is SLDKLLQNNY…VRSEFYQEFI (117 aa).

The protein localises to the cytoplasm. Its subcellular location is the membrane. Inhibits signal transduction by increasing the GTPase activity of G protein alpha subunits thereby driving them into their inactive GDP-bound form. Binds to G(i)-alpha and G(o)-alpha, but not to G(s)-alpha. The protein is Regulator of G-protein signaling 5 (RGS5) of Sus scrofa (Pig).